A 307-amino-acid chain; its full sequence is tRNA pseudouridine synthase B (307 aa).

Catalysis depends on D38, which acts as the Nucleophile.

This sequence belongs to the pseudouridine synthase TruB family. Type 1 subfamily.

The catalysed reaction is uridine(55) in tRNA = pseudouridine(55) in tRNA. Its function is as follows. Responsible for synthesis of pseudouridine from uracil-55 in the psi GC loop of transfer RNAs. In Bacillus anthracis, this protein is tRNA pseudouridine synthase B.